A 473-amino-acid chain; its full sequence is NAD-dependent protein deacetylase SRT1 (473 aa).

The Deacetylase sirtuin-type domain maps to 27–267; that stretch reads SHLLQCKIEE…AGVMESLNMK (241 aa). Residues 52 to 71 and 114 to 117 contribute to the NAD(+) site; these read GAGI…KGIW and QNVD. Histidine 134 serves as the catalytic Proton acceptor. Zn(2+) is bound by residues cysteine 142, cysteine 145, cysteine 167, and cysteine 172. Residues 209–211, 235–237, and valine 253 contribute to the NAD(+) site; these read GTS and NLQ. A disordered region spans residues 447–473; sequence LEGSGTSRKRSRTGKRKSKALAEETKA. Basic residues predominate over residues 453–465; sequence SRKRSRTGKRKSK.

This sequence belongs to the sirtuin family. Class IV subfamily. As to quaternary structure, binds to the promoter region of genes influenced by ethylene. Interacts with ENAP1; this interaction is enhanced in the presence of ethylene. Requires Zn(2+) as cofactor.

The protein localises to the nucleus. It catalyses the reaction N(6)-acetyl-L-lysyl-[protein] + NAD(+) + H2O = 2''-O-acetyl-ADP-D-ribose + nicotinamide + L-lysyl-[protein]. Functionally, NAD-dependent protein deacetylase. Has deacetylase activity towards H3K9Ac. May have a function in the safeguard against genome instability and DNA damage to ensure plant cell growth. Involved in responses to ethylene leading to the transcriptional repression of some ethylene-responsive genes via the regulation of histone acetylation H3K9Ac. This chain is NAD-dependent protein deacetylase SRT1, found in Arabidopsis thaliana (Mouse-ear cress).